Consider the following 197-residue polypeptide: Fucoxanthin-chlorophyll a-c binding protein E, chloroplastic (197 aa).

A chloroplast-targeting transit peptide spans 1–31 (MKFVVFASLLASAARFAPAQQSARTSVATNM). 3 helical membrane-spanning segments follow: residues 73–94 (ISML…PGDI), 114–134 (ISGA…LAVM), and 174–196 (GRAA…SLIP).

Belongs to the fucoxanthin chlorophyll protein family. The LHC complex of chromophytic algae is composed of fucoxanthin, chlorophyll A and C bound non-covalently by fucoxanthin chlorophyll proteins (FCPs). The ratio of the pigments in LHC; fucoxanthin: chlorophyll C: chlorophyll A; (0.6-1): (0.1-0.3): (1).

The protein localises to the plastid. It localises to the chloroplast thylakoid membrane. Its function is as follows. The light-harvesting complex (LHC) functions as a light receptor, it captures and delivers excitation energy to photosystems with which it is closely associated. Energy is transferred from the carotenoid and chlorophyll C (or B) to chlorophyll A and the photosynthetic reaction centers where it is used to synthesize ATP and reducing power. This chain is Fucoxanthin-chlorophyll a-c binding protein E, chloroplastic (FCPE), found in Phaeodactylum tricornutum (Diatom).